A 228-amino-acid chain; its full sequence is MPTLVLSRHGQSEWNLENRFTGWWDVNLTEQGVQEATAGGKALAEKGFEFDIAFTSVLTRAIKTTNLILEAGKTLWVPTEKDWRLNERHYGGLTGLNKAETAAKHGEEQVHIWRRSYDVPPPPMEKGSKFDLSGDRRYDGVKIPETESLKDTVARVLPYWEERIAPELKAGKRVLIGAHGNSLRALVKHLSKLSDEEIVKFELPTGQPLVYELNDDLTPKDRYFLNER.

Substrate contacts are provided by residues 8–15 (RHGQSEWN), 21–22 (TG), Arg-60, 87–90 (ERHY), Lys-98, 114–115 (RR), and 180–181 (GN). His-9 acts as the Tele-phosphohistidine intermediate in catalysis. The Proton donor/acceptor role is filled by Glu-87.

Belongs to the phosphoglycerate mutase family. BPG-dependent PGAM subfamily. In terms of assembly, homodimer.

It catalyses the reaction (2R)-2-phosphoglycerate = (2R)-3-phosphoglycerate. The protein operates within carbohydrate degradation; glycolysis; pyruvate from D-glyceraldehyde 3-phosphate: step 3/5. In terms of biological role, catalyzes the interconversion of 2-phosphoglycerate and 3-phosphoglycerate. The protein is 2,3-bisphosphoglycerate-dependent phosphoglycerate mutase of Zymomonas mobilis subsp. mobilis (strain ATCC 31821 / ZM4 / CP4).